A 422-amino-acid chain; its full sequence is PHAF1 protein T01G9.2 (422 aa).

This sequence belongs to the PHAF1 family.

The protein localises to the cytoplasm. Its subcellular location is the preautophagosomal structure. In terms of biological role, may play a regulatory role in autophagic activity. This Caenorhabditis elegans protein is PHAF1 protein T01G9.2.